Consider the following 196-residue polypeptide: MIDFDGYRPNVGIVICNRKGQVLWAKRCGQNSWQFPQGGINDNESAEQAMYRELHEEVGLQPKDVRLLYVSKHWLRYKLPKRLLRYDSKPMCIGQKQRWFLLQLVSDEKNINMQTTKSPEFDGWRWVSFWYPVRQVVSFKRDVYRKVMKEFASILFTDNPLIFSASREASLQHYSANKKYSQTKYTKRHFYKSRGQ.

The 144-residue stretch at 6 to 149 (GYRPNVGIVI…KRDVYRKVMK (144 aa)) folds into the Nudix hydrolase domain. Residues 38-59 (GGINDNESAEQAMYRELHEEVG) carry the Nudix box motif.

It belongs to the Nudix hydrolase family. RppH subfamily. A divalent metal cation is required as a cofactor.

Functionally, accelerates the degradation of transcripts by removing pyrophosphate from the 5'-end of triphosphorylated RNA, leading to a more labile monophosphorylated state that can stimulate subsequent ribonuclease cleavage. The chain is RNA pyrophosphohydrolase from Haemophilus influenzae (strain PittEE).